The following is a 344-amino-acid chain: F-box protein HRT3 (344 aa).

The TPR repeat unit spans residues 14 to 47; sequence AIAIWEKGVLKEKDGSMSDAINFYRSALKIHDNV. The region spanning 98–148 is the F-box domain; it reads WILEILPDDILLRIIKKVILMSGESWVNLSMTCSTFSKLCFHDSVPFKTFA.

In terms of assembly, interacts with SKP1. Component of the probable SCF(HRT3) complex containing CDC53, SKP1, RBX1 and HRT3.

It participates in protein modification; protein ubiquitination. In terms of biological role, substrate recognition component of a SCF (SKP1-CUL1-F-box protein) E3 ubiquitin-protein ligase complex which mediates the ubiquitination and subsequent proteasomal degradation of target proteins. Probably recognizes and binds to phosphorylated target proteins. The sequence is that of F-box protein HRT3 (HRT3) from Saccharomyces cerevisiae (strain ATCC 204508 / S288c) (Baker's yeast).